A 448-amino-acid chain; its full sequence is Probable 3-ketoacyl-CoA thiolase (448 aa).

The active-site Acyl-thioester intermediate is the Cys110. Catalysis depends on proton acceptor residues His402 and Cys432.

This sequence belongs to the thiolase-like superfamily. Thiolase family.

The protein resides in the mitochondrion. The enzyme catalyses an acyl-CoA + acetyl-CoA = a 3-oxoacyl-CoA + CoA. Its pathway is lipid metabolism; fatty acid beta-oxidation. Functionally, mitochondrial enzyme that catalyzes reactions of the mitochondrial beta-oxidation pathway. This Caenorhabditis elegans protein is Probable 3-ketoacyl-CoA thiolase.